The chain runs to 203 residues: Small ribosomal subunit protein uS4 (203 aa).

Residues 93 to 155 form the S4 RNA-binding domain; it reads RRLDSIVYRL…SKNLQQIRDA (63 aa).

The protein belongs to the universal ribosomal protein uS4 family. In terms of assembly, part of the 30S ribosomal subunit. Contacts protein S5. The interaction surface between S4 and S5 is involved in control of translational fidelity.

Its function is as follows. One of the primary rRNA binding proteins, it binds directly to 16S rRNA where it nucleates assembly of the body of the 30S subunit. With S5 and S12 plays an important role in translational accuracy. The protein is Small ribosomal subunit protein uS4 of Lactobacillus acidophilus (strain ATCC 700396 / NCK56 / N2 / NCFM).